Consider the following 559-residue polypeptide: Aminopeptidase Q (559 aa).

The Cytoplasmic segment spans residues 1 to 13; the sequence is MSRPFSSGVYVSR. The helical; Signal-anchor for type II membrane protein transmembrane segment at 14 to 34 threads the bilayer; sequence GVALLLAALTAVLLLVLVALA. At 35–559 the chain is on the lumenal side; sequence SLYGSCAHVQ…VPFRHFLAEH (525 aa). N-linked (GlcNAc...) asparagine glycans are attached at residues Asn121 and Asn129. Glu237 is a binding site for substrate. N-linked (GlcNAc...) asparagine glycosylation is found at Asn258, Asn285, and Asn343. 376–380 is a substrate binding site; sequence GAMEN. Position 412 (His412) interacts with Zn(2+). The Proton acceptor role is filled by Glu413. The Zn(2+) site is built by His416 and Glu435.

It belongs to the peptidase M1 family. As to quaternary structure, homodimer. The cofactor is Zn(2+). N-glycosylated.

The protein localises to the membrane. Inhibited by bestatin. Its function is as follows. Metalloprotease which may be important for placentation by regulating biological activity of key peptides at the embryo-maternal interface. On synthetic substrates it shows a marked preference for Leu-4-methylcoumaryl-7-amide (Leu-MCA) over Met-MCA, Arg-LCA and Lys-LCA. Cleaves the N-terminal amino acid of several peptides such as angiotensin-3, kisspeptin-10 and endokinin C. This is Aminopeptidase Q from Mus musculus (Mouse).